Reading from the N-terminus, the 498-residue chain is ATP synthase subunit beta, chloroplastic (498 aa).

172–179 (GGAGVGKT) lines the ATP pocket.

Belongs to the ATPase alpha/beta chains family. In terms of assembly, F-type ATPases have 2 components, CF(1) - the catalytic core - and CF(0) - the membrane proton channel. CF(1) has five subunits: alpha(3), beta(3), gamma(1), delta(1), epsilon(1). CF(0) has four main subunits: a(1), b(1), b'(1) and c(9-12).

It localises to the plastid. Its subcellular location is the chloroplast thylakoid membrane. It catalyses the reaction ATP + H2O + 4 H(+)(in) = ADP + phosphate + 5 H(+)(out). In terms of biological role, produces ATP from ADP in the presence of a proton gradient across the membrane. The catalytic sites are hosted primarily by the beta subunits. The polypeptide is ATP synthase subunit beta, chloroplastic (Saruma henryi (Upright wild ginger)).